We begin with the raw amino-acid sequence, 232 residues long: Ribose-5-phosphate isomerase A (232 aa).

Residues 31–34 (TGST), 88–91 (DGAD), and 101–104 (KGGG) each bind substrate. E110 serves as the catalytic Proton acceptor. K128 contacts substrate.

It belongs to the ribose 5-phosphate isomerase family. As to quaternary structure, homodimer.

It carries out the reaction aldehydo-D-ribose 5-phosphate = D-ribulose 5-phosphate. It functions in the pathway carbohydrate degradation; pentose phosphate pathway; D-ribose 5-phosphate from D-ribulose 5-phosphate (non-oxidative stage): step 1/1. Functionally, catalyzes the reversible conversion of ribose-5-phosphate to ribulose 5-phosphate. This is Ribose-5-phosphate isomerase A from Lactobacillus gasseri (strain ATCC 33323 / DSM 20243 / BCRC 14619 / CIP 102991 / JCM 1131 / KCTC 3163 / NCIMB 11718 / NCTC 13722 / AM63).